Reading from the N-terminus, the 387-residue chain is Major outer membrane porin (387 aa).

Positions 1-22 (MKKLLKSVLAFAVLGSASSLHA) are cleaved as a signal peptide.

This sequence belongs to the chlamydial porin (CP) (TC 1.B.2) family. Part of a disulfide cross-linked outer membrane complex (COMC) composed of the major outer membrane porin (MOMP), the small cysteine-rich protein (OmcA) and the large cysteine-rich periplasmic protein (OmcB).

It localises to the cell outer membrane. In elementary bodies (EBs, the infectious stage, which is able to survive outside the host cell) provides the structural integrity of the outer envelope through disulfide cross-links with the small cysteine-rich protein and the large cysteine-rich periplasmic protein. It has been described in publications as the Sarkosyl-insoluble COMC (Chlamydia outer membrane complex), and serves as the functional equivalent of peptidoglycan. Its function is as follows. Permits diffusion of specific solutes through the outer membrane. The protein is Major outer membrane porin (ompA) of Chlamydia muridarum (strain MoPn / Nigg).